Consider the following 511-residue polypeptide: MDEYEAQLLVVEQALENATDEHQRQELLALKENLQELLSLTRGGTEDDAATDDDSQNADNLDNELERLKSELNDMEATGASKSNENEVQQLADLRTKYSSMVGEKCSAPHEHSWGAISYHNALICGVDDEVIINGDGALDARLRVLFTNPTHREMLPCSYYLEGECRFDEARCRYSHGALVTGSSIRKYNPPDFHKLSRSCPVLAQLPDRLWHRGRVLCVNFVEQVCRVRLDGQDHKERERDFKFEELFPLTTDQEDELTSEDSSSVNDGSSDEEESDMDDLEAARRARMVELSLFTFKPTEKLGAWEEYTRGIGSKLMEKMGYIHGTGLGSDGRGIVTPVSAQILPKGRSLDACMELREAANGDKDYFSVERKLQRAQRRQKKANEKAYVRESQRTDVFSFLNSSVLGSDNKQQAEPEAKKAKANDLQQHSTKTLNVETVRIADDIRRKQRDIAKVQQSLDRNTGDVQLQKRLQAQMHNQKQELATLQAQERSLSKEQQTRKSKNKMFEF.

The C3H1-type zinc-finger motif lies at 157–180 (PCSYYLEGECRFDEARCRYSHGAL). Residues 254–281 (DQEDELTSEDSSSVNDGSSDEEESDMDD) form a disordered region. Acidic residues predominate over residues 271–281 (SSDEEESDMDD). Residues 311-357 (TRGIGSKLMEKMGYIHGTGLGSDGRGIVTPVSAQILPKGRSLDACME) form the G-patch domain. Disordered stretches follow at residues 409-433 (GSDNKQQAEPEAKKAKANDLQQHST) and 478-511 (MHNQKQELATLQAQERSLSKEQQTRKSKNKMFEF). Over residues 414 to 425 (QQAEPEAKKAKA) the composition is skewed to basic and acidic residues. Over residues 478 to 493 (MHNQKQELATLQAQER) the composition is skewed to polar residues. Basic and acidic residues predominate over residues 494 to 511 (SLSKEQQTRKSKNKMFEF).

The protein localises to the nucleus. Transcription repressor. This is Zinc finger CCCH-type with G patch domain-containing protein from Drosophila ananassae (Fruit fly).